The following is a 498-amino-acid chain: ATP synthase subunit beta, chloroplastic (498 aa).

ATP is bound at residue 172–179; sequence GGAGVGKT.

Belongs to the ATPase alpha/beta chains family. In terms of assembly, F-type ATPases have 2 components, CF(1) - the catalytic core - and CF(0) - the membrane proton channel. CF(1) has five subunits: alpha(3), beta(3), gamma(1), delta(1), epsilon(1). CF(0) has four main subunits: a(1), b(1), b'(1) and c(9-12).

Its subcellular location is the plastid. The protein resides in the chloroplast thylakoid membrane. The enzyme catalyses ATP + H2O + 4 H(+)(in) = ADP + phosphate + 5 H(+)(out). Functionally, produces ATP from ADP in the presence of a proton gradient across the membrane. The catalytic sites are hosted primarily by the beta subunits. This is ATP synthase subunit beta, chloroplastic from Sorghum bicolor (Sorghum).